The primary structure comprises 279 residues: Prephenate dehydratase (279 aa).

Residues 2–178 form the Prephenate dehydratase domain; the sequence is KIAYLGPRGS…NSTRFWLLGK (177 aa). One can recognise an ACT domain in the interval 194 to 270; that stretch reads LALTLPDNLP…LGVKVRLLGN (77 aa).

The catalysed reaction is prephenate + H(+) = 3-phenylpyruvate + CO2 + H2O. Its pathway is amino-acid biosynthesis; L-phenylalanine biosynthesis; phenylpyruvate from prephenate: step 1/1. This is Prephenate dehydratase (pheA) from Lactococcus lactis subsp. lactis (strain IL1403) (Streptococcus lactis).